Here is a 262-residue protein sequence, read N- to C-terminus: tRNA pseudouridine synthase A (262 aa).

Catalysis depends on D52, which acts as the Nucleophile. Residue Y110 participates in substrate binding.

This sequence belongs to the tRNA pseudouridine synthase TruA family. As to quaternary structure, homodimer.

The catalysed reaction is uridine(38/39/40) in tRNA = pseudouridine(38/39/40) in tRNA. Formation of pseudouridine at positions 38, 39 and 40 in the anticodon stem and loop of transfer RNAs. The polypeptide is tRNA pseudouridine synthase A (Hydrogenovibrio crunogenus (strain DSM 25203 / XCL-2) (Thiomicrospira crunogena)).